A 593-amino-acid chain; its full sequence is Monoterpene synthase 7, chloroplastic (593 aa).

The transit peptide at 1–39 directs the protein to the chloroplast; it reads MSVSLSFAASATFGFRGGLGGFSRPAAAIKQWRCLPRIQ. Mg(2+) is bound by residues aspartate 348, aspartate 352, aspartate 491, and glutamate 499. A DDXXD motif motif is present at residues 348-352; that stretch reads DDVYD.

Belongs to the terpene synthase family. Tpsa subfamily. It depends on Mg(2+) as a cofactor. Mn(2+) serves as cofactor. Highly expressed in flowers, petals and sepals, but almost undetectable in vegetative organs.

Its subcellular location is the plastid. The protein localises to the chloroplast. It catalyses the reaction (2E)-geranyl diphosphate = sabinene + diphosphate. The catalysed reaction is (2E)-geranyl diphosphate = terpinolene + diphosphate. The enzyme catalyses (2E)-geranyl diphosphate = alpha-pinene + diphosphate. It carries out the reaction (2E)-geranyl diphosphate = beta-pinene + diphosphate. It catalyses the reaction (2E)-geranyl diphosphate = beta-myrcene + diphosphate. The catalysed reaction is (2E)-geranyl diphosphate = alpha-terpinene + diphosphate. The enzyme catalyses (2E)-geranyl diphosphate = beta-phellandrene + diphosphate. It carries out the reaction (2E)-geranyl diphosphate = gamma-terpinene + diphosphate. It participates in secondary metabolite biosynthesis; terpenoid biosynthesis. Its function is as follows. Monoterpene synthase involved in the biosynthesis of volatile compounds present in floral scent. Mediates the conversion of (2E)-geranyl diphosphate (GPP) into sabinene and sub-products such as alpha-thujene, alpha-pinene, beta-pinene, myrcene, alpha-phellandrene, alpha-terpinene, beta-phellandrene, gamma-terpinene and terpinolene. Unable to use farnesyl diphosphate (FPP) as substrate. The sequence is that of Monoterpene synthase 7, chloroplastic from Hedychium coronarium (White butterfly ginger-lily).